Consider the following 457-residue polypeptide: Pup--protein ligase (457 aa).

Residue Glu9 coordinates Mg(2+). Arg53 is a binding site for ATP. A Mg(2+)-binding site is contributed by Tyr55. The active-site Proton acceptor is Asp57. Glu63 is a binding site for Mg(2+). ATP-binding residues include Thr66 and Trp424.

The protein belongs to the Pup ligase/Pup deamidase family. Pup-conjugating enzyme subfamily.

The enzyme catalyses ATP + [prokaryotic ubiquitin-like protein]-L-glutamate + [protein]-L-lysine = ADP + phosphate + N(6)-([prokaryotic ubiquitin-like protein]-gamma-L-glutamyl)-[protein]-L-lysine.. It participates in protein degradation; proteasomal Pup-dependent pathway. It functions in the pathway protein modification; protein pupylation. Functionally, catalyzes the covalent attachment of the prokaryotic ubiquitin-like protein modifier Pup to the proteasomal substrate proteins, thereby targeting them for proteasomal degradation. This tagging system is termed pupylation. The ligation reaction involves the side-chain carboxylate of the C-terminal glutamate of Pup and the side-chain amino group of a substrate lysine. The chain is Pup--protein ligase from Xylanimonas cellulosilytica (strain DSM 15894 / JCM 12276 / CECT 5975 / KCTC 9989 / LMG 20990 / NBRC 107835 / XIL07).